The sequence spans 382 residues: Succinyl-diaminopimelate desuccinylase (382 aa).

Histidine 68 contributes to the Zn(2+) binding site. Residue aspartate 70 is part of the active site. Aspartate 101 contacts Zn(2+). The active-site Proton acceptor is the glutamate 135. Residues glutamate 136, glutamate 164, and histidine 350 each contribute to the Zn(2+) site.

The protein belongs to the peptidase M20A family. DapE subfamily. As to quaternary structure, homodimer. Zn(2+) is required as a cofactor. Co(2+) serves as cofactor.

It catalyses the reaction N-succinyl-(2S,6S)-2,6-diaminopimelate + H2O = (2S,6S)-2,6-diaminopimelate + succinate. The protein operates within amino-acid biosynthesis; L-lysine biosynthesis via DAP pathway; LL-2,6-diaminopimelate from (S)-tetrahydrodipicolinate (succinylase route): step 3/3. Functionally, catalyzes the hydrolysis of N-succinyl-L,L-diaminopimelic acid (SDAP), forming succinate and LL-2,6-diaminopimelate (DAP), an intermediate involved in the bacterial biosynthesis of lysine and meso-diaminopimelic acid, an essential component of bacterial cell walls. The chain is Succinyl-diaminopimelate desuccinylase from Acidithiobacillus ferrooxidans (strain ATCC 23270 / DSM 14882 / CIP 104768 / NCIMB 8455) (Ferrobacillus ferrooxidans (strain ATCC 23270)).